Here is a 671-residue protein sequence, read N- to C-terminus: APC membrane recruitment protein 2 (671 aa).

Disordered regions lie at residues 1-24 (METS…ASVG), 76-358 (SGGT…SDPS), 391-414 (EAGP…KNPG), and 444-598 (SQTE…PLRT). Composition is skewed to gly residues over residues 7 to 21 (RGGG…GAGA) and 126 to 137 (GGDSGGGGGGRP). Residue Ser162 is modified to Phosphoserine. Over residues 171 to 182 (GRSENGKGEPVD) the composition is skewed to basic and acidic residues. Phosphoserine is present on residues Ser229 and Ser233. Composition is skewed to basic and acidic residues over residues 236–260 (CVKE…RDPA), 276–286 (APARSCREAEG), and 295–307 (ARGE…RRAE). The segment covering 342-353 (APAAPDPASVDP) has biased composition (low complexity). 2 positions are modified to phosphoserine: Ser355 and Ser358. The segment covering 447–458 (EEQGPEPQEGAA) has biased composition (low complexity). Basic and acidic residues-rich tracts occupy residues 472–487 (TPKD…DASS) and 498–514 (IEPH…KEQQ).

Belongs to the Amer family. Interacts with APC.

It is found in the cell membrane. Its function is as follows. Negative regulator of the canonical Wnt signaling pathway involved in neuroectodermal patterning. Acts by specifically binding phosphatidylinositol 4,5-bisphosphate (PtdIns(4,5)P2), translocating to the cell membrane and interacting with key regulators of the canonical Wnt signaling pathway, such as components of the beta-catenin destruction complex. The chain is APC membrane recruitment protein 2 (AMER2) from Homo sapiens (Human).